Reading from the N-terminus, the 320-residue chain is ATP-dependent 6-phosphofructokinase (320 aa).

Gly-12 is a binding site for ATP. Residues 22–26 (RGVVR) and 55–60 (RYSVSD) each bind ADP. ATP contacts are provided by residues 73-74 (RF) and 103-106 (GDGS). Asp-104 provides a ligand contact to Mg(2+). A substrate-binding site is contributed by 126–128 (TID). The active-site Proton acceptor is Asp-128. Arg-155 lines the ADP pocket. Substrate-binding positions include Arg-163 and 170-172 (MGR). ADP is bound by residues 186–188 (GCE), Lys-212, and 214–216 (KKH). Residues Glu-223, Arg-244, and 250-253 (HIQR) each bind substrate.

It belongs to the phosphofructokinase type A (PFKA) family. ATP-dependent PFK group I subfamily. Prokaryotic clade 'B1' sub-subfamily. As to quaternary structure, homotetramer. Mg(2+) serves as cofactor.

The protein resides in the cytoplasm. The enzyme catalyses beta-D-fructose 6-phosphate + ATP = beta-D-fructose 1,6-bisphosphate + ADP + H(+). It participates in carbohydrate degradation; glycolysis; D-glyceraldehyde 3-phosphate and glycerone phosphate from D-glucose: step 3/4. Its activity is regulated as follows. Allosterically activated by ADP and other diphosphonucleosides, and allosterically inhibited by phosphoenolpyruvate. In terms of biological role, catalyzes the phosphorylation of D-fructose 6-phosphate to fructose 1,6-bisphosphate by ATP, the first committing step of glycolysis. This is ATP-dependent 6-phosphofructokinase from Salmonella gallinarum (strain 287/91 / NCTC 13346).